A 249-amino-acid polypeptide reads, in one-letter code: Chitooligosaccharide deacetylase (249 aa).

Mg(2+) is bound by residues H61 and H125.

It belongs to the YdjC deacetylase family. ChbG subfamily. As to quaternary structure, homodimer. The cofactor is Mg(2+).

It is found in the cytoplasm. It carries out the reaction N,N'-diacetylchitobiose + H2O = N-acetyl-beta-D-glucosaminyl-(1-&gt;4)-D-glucosamine + acetate. It catalyses the reaction diacetylchitobiose-6'-phosphate + H2O = N'-monoacetylchitobiose-6'-phosphate + acetate. Its pathway is glycan degradation; chitin degradation. Involved in the degradation of chitin. ChbG is essential for growth on the acetylated chitooligosaccharides chitobiose and chitotriose but is dispensable for growth on cellobiose and chitosan dimer, the deacetylated form of chitobiose. Deacetylation of chitobiose-6-P and chitotriose-6-P is necessary for both the activation of the chb promoter by the regulatory protein ChbR and the hydrolysis of phosphorylated beta-glucosides by the phospho-beta-glucosidase ChbF. Catalyzes the removal of only one acetyl group from chitobiose-6-P to yield monoacetylchitobiose-6-P, the inducer of ChbR and the substrate of ChbF. The sequence is that of Chitooligosaccharide deacetylase from Escherichia coli O17:K52:H18 (strain UMN026 / ExPEC).